Reading from the N-terminus, the 391-residue chain is Trehalose-phosphate phosphatase (391 aa).

The Nucleophile role is filled by Asp-147. Residues Asp-147, Asp-149, and Asp-330 each contribute to the Mg(2+) site. Asp-147–Asp-149 contacts substrate.

It belongs to the trehalose phosphatase family. Mg(2+) is required as a cofactor.

It catalyses the reaction alpha,alpha-trehalose 6-phosphate + H2O = alpha,alpha-trehalose + phosphate. It participates in glycan biosynthesis; trehalose biosynthesis. Its function is as follows. Removes the phosphate from trehalose 6-phosphate to produce free trehalose. The polypeptide is Trehalose-phosphate phosphatase (otsB) (Mycobacterium bovis (strain ATCC BAA-935 / AF2122/97)).